A 370-amino-acid chain; its full sequence is MRSFCIAALLAVASAFTTQPTSFTVKTANVGERASGVFPEQSSAHRTRKATIVMDGKANAIRDRITSVKNTRKITMAMKLVRAAPKVRRAQDAVLATRPFSETLQSVFGGLIQRLGGESVDLPLLTEREVKKVTLLVITGDRGLCGGYNSFMIKKAEARFNELKKNGVEADLILVGKKGIAYFERRGFPIRKKYETGQNPTAKQALAIAEEVSSTFLSGESDAVELLYTKFVSLIASSPSIRTLVPFSASDITAKGDEVFQLTSESGQFGVERTELDVAAPQEFPNDMIFEQDPIQIVNAILPLYLNGQILRTLQESVASELAARMQSMQSASDNAGSLAKQLNLEYNRARQAAVTQELLEIISGASALD.

The N-terminal 54 residues, 1–54 (MRSFCIAALLAVASAFTTQPTSFTVKTANVGERASGVFPEQSSAHRTRKATIVM), are a transit peptide targeting the chloroplast. Cysteine 145 is a catalytic residue.

Belongs to the ATPase gamma chain family. In terms of assembly, F-type ATPases have 2 components, CF(1) - the catalytic core - and CF(0) - the membrane proton channel. CF(1) has five subunits: alpha(3), beta(3), gamma(1), delta(1), epsilon(1). CF(0) has four main subunits: a, b, b' and c.

Its subcellular location is the plastid. It localises to the chloroplast thylakoid membrane. Functionally, produces ATP from ADP in the presence of a proton gradient across the membrane. The gamma chain is believed to be important in regulating ATPase activity and the flow of protons through the CF(0) complex. The sequence is that of ATP synthase gamma chain, chloroplastic (ATPC) from Phaeodactylum tricornutum (Diatom).